Reading from the N-terminus, the 147-residue chain is Microsomal glutathione S-transferase 2 (147 aa).

The next 3 membrane-spanning stretches (helical) occupy residues 6–26 (SLLA…AWRV), 62–82 (VFIV…AACL), and 107–127 (GFRL…LGVA).

As to quaternary structure, homotrimer.

The protein resides in the endoplasmic reticulum membrane. The protein localises to the microsome membrane. It carries out the reaction RX + glutathione = an S-substituted glutathione + a halide anion + H(+). The catalysed reaction is 1-chloro-2,4-dinitrobenzene + glutathione = 2,4-dinitrophenyl-S-glutathione + chloride + H(+). It catalyses the reaction leukotriene C4 = leukotriene A4 + glutathione. The enzyme catalyses (5S)-hydroperoxy-(6E,8Z,11Z,14Z)-eicosatetraenoate + 2 glutathione = (5S)-hydroxy-(6E,8Z,11Z,14Z)-eicosatetraenoate + glutathione disulfide + H2O. Its activity is regulated as follows. Each monomer binds on GSH molecule but only one subunit is catalytically active. Functionally, catalyzes several different glutathione-dependent reactions. Catalyzes the glutathione-dependent reduction of lipid hydroperoxides, such as 5-HPETE. Has glutathione transferase activity, toward xenobiotic electrophiles, such as 1-chloro-2, 4-dinitrobenzene (CDNB). Also catalyzes the conjugation of leukotriene A4 with reduced glutathione to form leukotriene C4 (LTC4). Involved in oxidative DNA damage induced by ER stress and anticancer agents by activating LTC4 biosynthetic machinery in nonimmune cells. The sequence is that of Microsomal glutathione S-transferase 2 from Mus musculus (Mouse).